We begin with the raw amino-acid sequence, 293 residues long: Ribonuclease HIII (293 aa).

An RNase H type-2 domain is found at Leu78 to Arg293. Residues Asp84, Glu85, and Asp187 each contribute to the a divalent metal cation site.

Belongs to the RNase HII family. RnhC subfamily. The cofactor is Mn(2+). Mg(2+) serves as cofactor.

It localises to the cytoplasm. The catalysed reaction is Endonucleolytic cleavage to 5'-phosphomonoester.. In terms of biological role, endonuclease that specifically degrades the RNA of RNA-DNA hybrids. The chain is Ribonuclease HIII from Streptococcus pneumoniae (strain 70585).